The chain runs to 344 residues: AI-2 transport protein TqsA (344 aa).

The Cytoplasmic segment spans residues Met-1 to Pro-4. The chain crosses the membrane as a helical span at residues Ile-5–Cys-25. Topologically, residues Gly-26–Ala-30 are periplasmic. A helical transmembrane segment spans residues Ala-31 to Val-51. At Gln-52–Arg-61 the chain is on the cytoplasmic side. Residues Val-62–Tyr-82 traverse the membrane as a helical segment. The Periplasmic portion of the chain corresponds to Leu-83 to Ser-149. The helical transmembrane segment at Ser-150–Gly-170 threads the bilayer. Residues Lys-171 to Tyr-196 are Cytoplasmic-facing. A helical membrane pass occupies residues Leu-197–Ala-217. The Periplasmic segment spans residues Leu-218–Arg-221. Residues Phe-222–Val-242 form a helical membrane-spanning segment. Over Leu-243–Gly-257 the chain is Cytoplasmic. A helical transmembrane segment spans residues Phe-258–Ile-278. Topologically, residues Leu-279 to Thr-292 are periplasmic. The chain crosses the membrane as a helical span at residues Leu-293 to Leu-313. The Cytoplasmic segment spans residues Ser-314–Glu-344.

It belongs to the autoinducer-2 exporter (AI-2E) (TC 2.A.86) family.

The protein localises to the cell inner membrane. It catalyses the reaction (2R,4S)-2-methyltetrahydrofuran-2,3,3,4-tetrol(in) = (2R,4S)-2-methyltetrahydrofuran-2,3,3,4-tetrol(out). Involved in the transport of the quorum-sensing signal autoinducer 2 (AI-2). Controls the transport of AI-2 either by enhancing its secretion or inhibiting its uptake and consequently represses biofilm formation and motility and affects the global gene expression in biofilms. The protein is AI-2 transport protein TqsA of Escherichia coli (strain K12).